The sequence spans 177 residues: MSIEKLKAALPEYAKDIKLNLSSITRSSVLDQEQLWGTLLASAAATRNPQVLADIGAEATDHLSAAARHAALGAAAIMGMNNVFYRGRGFLEGRYDDLRPGLRMNIIANPGIPKANFELWSFAVSAINGCSHCLVAHEHTLRTVGVDREAIFEALKAAAIVSGVAQALATIEALSPS.

Residue Cys130 is the Proton donor of the active site. Cys130 and Cys133 are oxidised to a cystine. The Cysteine sulfenic acid (-SOH) intermediate role is filled by Cys133.

It belongs to the AhpD family. In terms of assembly, homotrimer.

The catalysed reaction is N(6)-[(R)-dihydrolipoyl]-L-lysyl-[lipoyl-carrier protein] + a hydroperoxide = N(6)-[(R)-lipoyl]-L-lysyl-[lipoyl-carrier protein] + an alcohol + H2O. Antioxidant protein with alkyl hydroperoxidase activity. Required for the reduction of the AhpC active site cysteine residues and for the regeneration of the AhpC enzyme activity. The protein is Alkyl hydroperoxide reductase AhpD of Mycobacterium bovis (strain ATCC BAA-935 / AF2122/97).